The primary structure comprises 106 residues: Phosphoribosyl-ATP pyrophosphatase (106 aa).

Belongs to the PRA-PH family.

It is found in the cytoplasm. The enzyme catalyses 1-(5-phospho-beta-D-ribosyl)-ATP + H2O = 1-(5-phospho-beta-D-ribosyl)-5'-AMP + diphosphate + H(+). It participates in amino-acid biosynthesis; L-histidine biosynthesis; L-histidine from 5-phospho-alpha-D-ribose 1-diphosphate: step 2/9. The chain is Phosphoribosyl-ATP pyrophosphatase from Limosilactobacillus fermentum (strain NBRC 3956 / LMG 18251) (Lactobacillus fermentum).